The sequence spans 488 residues: ATP synthase subunit beta (488 aa).

Residue 155–162 (GGAGVGKT) coordinates ATP. The disordered stretch occupies residues 467 to 488 (GFAPDDQNTDADEKPAAQAAAN).

The protein belongs to the ATPase alpha/beta chains family. F-type ATPases have 2 components, CF(1) - the catalytic core - and CF(0) - the membrane proton channel. CF(1) has five subunits: alpha(3), beta(3), gamma(1), delta(1), epsilon(1). CF(0) has three main subunits: a(1), b(2) and c(9-12). The alpha and beta chains form an alternating ring which encloses part of the gamma chain. CF(1) is attached to CF(0) by a central stalk formed by the gamma and epsilon chains, while a peripheral stalk is formed by the delta and b chains.

It is found in the cell membrane. It carries out the reaction ATP + H2O + 4 H(+)(in) = ADP + phosphate + 5 H(+)(out). Its function is as follows. Produces ATP from ADP in the presence of a proton gradient across the membrane. The catalytic sites are hosted primarily by the beta subunits. This Lacticaseibacillus casei (strain BL23) (Lactobacillus casei) protein is ATP synthase subunit beta.